Reading from the N-terminus, the 92-residue chain is Small ribosomal subunit protein uS19 (92 aa).

The protein belongs to the universal ribosomal protein uS19 family.

Functionally, protein S19 forms a complex with S13 that binds strongly to the 16S ribosomal RNA. The sequence is that of Small ribosomal subunit protein uS19 from Methylobacterium radiotolerans (strain ATCC 27329 / DSM 1819 / JCM 2831 / NBRC 15690 / NCIMB 10815 / 0-1).